A 332-amino-acid chain; its full sequence is tRNA dimethylallyltransferase (332 aa).

17-24 (GPTCSGKS) is an ATP binding site. A substrate-binding site is contributed by 19 to 24 (TCSGKS). Interaction with substrate tRNA regions lie at residues 42 to 45 (DSMQ) and 166 to 170 (QRVAR).

This sequence belongs to the IPP transferase family. Monomer. The cofactor is Mg(2+).

It carries out the reaction adenosine(37) in tRNA + dimethylallyl diphosphate = N(6)-dimethylallyladenosine(37) in tRNA + diphosphate. Catalyzes the transfer of a dimethylallyl group onto the adenine at position 37 in tRNAs that read codons beginning with uridine, leading to the formation of N6-(dimethylallyl)adenosine (i(6)A). This is tRNA dimethylallyltransferase from Gluconacetobacter diazotrophicus (strain ATCC 49037 / DSM 5601 / CCUG 37298 / CIP 103539 / LMG 7603 / PAl5).